The chain runs to 163 residues: Probable phosphotransferase enzyme IIB component M6_Spy0801 (163 aa).

One can recognise a PTS EIIB type-4 domain in the interval 1–163 (MITQIRVDDR…TKVHLSQLVN (163 aa)). Catalysis depends on His-13, which acts as the Pros-phosphohistidine intermediate.

The protein resides in the cytoplasm. The phosphoenolpyruvate-dependent sugar phosphotransferase system (sugar PTS), a major carbohydrate active -transport system, catalyzes the phosphorylation of incoming sugar substrates concomitantly with their translocation across the cell membrane. The sequence is that of Probable phosphotransferase enzyme IIB component M6_Spy0801 from Streptococcus pyogenes serotype M6 (strain ATCC BAA-946 / MGAS10394).